The primary structure comprises 291 residues: MWEAIISFFLTSVLSVFAKKTEFLDRPDSRKSHGRAVPPVGGVSIFLTLLIFERDNPFFLFSIPLFLLGLLDDLFDLSYRIKLAVTALVAVWFSTAVTIEVSIFGARIHPVFFVIWFVGMVNAFNVVDGLDGLLSGISLFSSLMIGERSLAFSIIGFLPWNLPDAKVFLGNSGSFLLGAYLSTASVVFFEGDLGYATLFLGFPFYEIVFSFVRRLVVKKNPFSPDEKHTHHVFSRKIGKWKTLLILVSFSLMFNLLGLSQKFYFIFLYVVLCCVLLFTYCVLQRGNGNLKL.

Helical transmembrane passes span 4–24 (AIIS…TEFL), 32–52 (SHGR…LLIF), 57–77 (PFFL…LFDL), 84–104 (AVTA…VSIF), 110–130 (PVFF…VDGL), 138–160 (SLFS…FLPW), 167–189 (VFLG…VVFF), 194–216 (GYAT…RRLV), 237–257 (IGKW…NLLG), and 262–282 (FYFI…YCVL).

This sequence belongs to the glycosyltransferase 4 family. WecA subfamily. It depends on Mg(2+) as a cofactor. Requires Mn(2+) as cofactor.

The protein resides in the cell membrane. The enzyme catalyses di-trans,octa-cis-undecaprenyl phosphate + UDP-N-acetyl-alpha-D-glucosamine = N-acetyl-alpha-D-glucosaminyl-di-trans,octa-cis-undecaprenyl diphosphate + UMP. It participates in cell wall biogenesis; cell wall polysaccharide biosynthesis. Its activity is regulated as follows. Partially inhibited by magnesium at concentration higher than 10 mM and totally inhibited at concentration higher than 250 mM. Also inhibited by tunicamycin, NaCl and KCl. In terms of biological role, catalyzes the transfer of the GlcNAc-1-phosphate moiety from UDP-GlcNAc onto the carrier lipid undecaprenyl phosphate (C55-P), yielding GlcNAc-pyrophosphoryl-undecaprenyl (GlcNAc-PP-C55), the lipid intermediate involved in the synthesis of various bacterial cell envelope components. The enzyme is highly active when tested with C35-P, instead of its natural C55-P lipid substrate, suggesting that at least a 35-carbon chain is required for the lipid to be a substrate of WecA. The chain is Undecaprenyl-phosphate alpha-N-acetylglucosaminyl 1-phosphate transferase (wecA) from Thermotoga maritima (strain ATCC 43589 / DSM 3109 / JCM 10099 / NBRC 100826 / MSB8).